The primary structure comprises 355 residues: Methylthioribose-1-phosphate isomerase (355 aa).

Substrate is bound by residues 47–49 (RGA), Arg-91, and Gln-199. Catalysis depends on Asp-240, which acts as the Proton donor. 250 to 251 (NK) contacts substrate.

This sequence belongs to the eIF-2B alpha/beta/delta subunits family. MtnA subfamily.

The enzyme catalyses 5-(methylsulfanyl)-alpha-D-ribose 1-phosphate = 5-(methylsulfanyl)-D-ribulose 1-phosphate. It functions in the pathway amino-acid biosynthesis; L-methionine biosynthesis via salvage pathway; L-methionine from S-methyl-5-thio-alpha-D-ribose 1-phosphate: step 1/6. Functionally, catalyzes the interconversion of methylthioribose-1-phosphate (MTR-1-P) into methylthioribulose-1-phosphate (MTRu-1-P). This Oleidesulfovibrio alaskensis (strain ATCC BAA-1058 / DSM 17464 / G20) (Desulfovibrio alaskensis) protein is Methylthioribose-1-phosphate isomerase.